A 666-amino-acid polypeptide reads, in one-letter code: Calpain-10 (666 aa).

The 309-residue stretch at 13 to 321 (LFRDAAFPAS…FDEVTIGYPV (309 aa)) folds into the Calpain catalytic domain. Residues C73, H238, and N263 contribute to the active site. Domain III stretches follow at residues 322 to 488 (TEAG…ISLS) and 507 to 648 (EWET…IHSQ).

It belongs to the peptidase C2 family.

Functionally, calcium-regulated non-lysosomal thiol-protease which catalyzes limited proteolysis of substrates involved in cytoskeletal remodeling and signal transduction. May play a role in insulin-stimulated glucose uptake. This chain is Calpain-10 (Capn10), found in Mus musculus (Mouse).